A 719-amino-acid chain; its full sequence is LKIVVERDPIKTSFEKWAKPGHFSKTLAKGPNTTTWIWNLHADAHDFDSHTNDLEEISRKVFSAHFGQLAIIFIWLSGMYFHGARFSNYEAWLGDPTHIKPSAQVVWPIVGQEILNGDVGGGFRGIQITSGFFQIWRASGITSELQLYCTATGALIFAALMLFAGWFHYHKAAPKLAWFQDVESMLNHHLAGLLGLGSLGWAGHQVHVSLPINQLLDAGVDPKEIPLPHEFISNRDLLAQLYPSFAEGLTPFFTLNWSEYSDFLTFRGGLNPVTGGLWLTDTAHHHLAIAILFLIAGHMYRTNWGIGHNLKEILEAHKGPFTGEGHRGLYEILTTSWHAQLALNLAMLGSLTIVVAHHMYSMPPYPYLAIDYGTQLSLFTHHMWIGGFLIVGAAAHAAIFMVRDYDPTTQYNNLLDRVLRHRDAIVSHLNWACIFLGFHSFGLYIHNDTMSALGRPQDMFSDTAIQLQPIFAQWIQNTHASSPSLTAPDATASTSLTWGGGDLVAVGAKVALLPIPLGTADFLVHHIHAFTIHVTVLILLKGVLFARSSRLIPDKVNLGFRFPCDGPGRGGTCQVSAWDHVFLGLFWMYNAISVVIFHFSWKMQSDVWGSISDQGVVTHITGGNFAQSSITINGWLRDFLWAQASQVIQSYGSSLSAYGLFFLGAHFVWAFSLMFLFSGRGYWQELIESIVWAHNKLKVAPAIQPRALSIVQGRAVGVA.

The next 8 membrane-spanning stretches (helical) occupy residues 61–84 (VFSAHFGQLAIIFIWLSGMYFHGA), 147–170 (LYCTATGALIFAALMLFAGWFHYH), 186–210 (LNHHLAGLLGLGSLGWAGHQVHVSL), 282–300 (TAHHHLAIAILFLIAGHMY), 337–360 (WHAQLALNLAMLGSLTIVVAHHMY), 376–402 (LSLFTHHMWIGGFLIVGAAAHAAIFMV), 424–446 (AIVSHLNWACIFLGFHSFGLYIH), and 522–540 (FLVHHIHAFTIHVTVLILL). [4Fe-4S] cluster contacts are provided by Cys564 and Cys573. 2 consecutive transmembrane segments (helical) span residues 580-601 (HVFLGLFWMYNAISVVIFHFSW) and 655-677 (LSAYGLFFLGAHFVWAFSLMFLF). His666 contributes to the chlorophyll a' binding site. Chlorophyll a is bound by residues Met674 and Tyr682. Phylloquinone is bound at residue Trp683. A helical membrane pass occupies residues 715-719 (AVGVA).

It belongs to the PsaA/PsaB family. The PsaA/B heterodimer binds the P700 chlorophyll special pair and subsequent electron acceptors. PSI consists of a core antenna complex that captures photons, and an electron transfer chain that converts photonic excitation into a charge separation. The eukaryotic PSI reaction center is composed of at least 11 subunits. P700 is a chlorophyll a/chlorophyll a' dimer, A0 is one or more chlorophyll a, A1 is one or both phylloquinones and FX is a shared 4Fe-4S iron-sulfur center. serves as cofactor.

Its subcellular location is the plastid. It is found in the chloroplast thylakoid membrane. The enzyme catalyses reduced [plastocyanin] + hnu + oxidized [2Fe-2S]-[ferredoxin] = oxidized [plastocyanin] + reduced [2Fe-2S]-[ferredoxin]. In terms of biological role, psaA and PsaB bind P700, the primary electron donor of photosystem I (PSI), as well as the electron acceptors A0, A1 and FX. PSI is a plastocyanin-ferredoxin oxidoreductase, converting photonic excitation into a charge separation, which transfers an electron from the donor P700 chlorophyll pair to the spectroscopically characterized acceptors A0, A1, FX, FA and FB in turn. Oxidized P700 is reduced on the lumenal side of the thylakoid membrane by plastocyanin. The protein is Photosystem I P700 chlorophyll a apoprotein A1 of Torreya californica (California nutmeg).